Reading from the N-terminus, the 422-residue chain is Hispidin-3-hydroxylase (422 aa).

A helical membrane pass occupies residues 6–26; the sequence is NSLSVLIVGAGLGGLAAAIAL. Positions 50, 108, and 318 each coordinate FAD.

It belongs to the paxM FAD-dependent monooxygenase family. As to quaternary structure, monomer. FAD serves as cofactor.

The protein localises to the membrane. The catalysed reaction is hispidin + NADH + O2 + H(+) = 3-hydroxyhispidin + NAD(+) + H2O. The enzyme catalyses hispidin + NADPH + O2 + H(+) = 3-hydroxyhispidin + NADP(+) + H2O. It functions in the pathway secondary metabolite biosynthesis. In terms of biological role, hispidin-3-hydroxylase; part of the gene cluster that mediates the fungal bioluminescence cycle. Hydroxylates hispidin in order to produce the fungal luciferin 3-hydroxyhispidin. The fungal bioluminescence cycle begins with the hispidin synthetase that catalyzes the formation of hispidin which is further hydroxylated by the hispidin-3-hydroxylase, yielding the fungal luciferin 3-hydroxyhispidin. The luciferase then produces an endoperoxide as a high-energy intermediate with decomposition that yields oxyluciferin (also known as caffeoylpyruvate) and light emission. Oxyluciferin can be recycled to caffeic acid by caffeoylpyruvate hydrolase. The polypeptide is Hispidin-3-hydroxylase (Neonothopanus nambi (Agaricus nambi)).